We begin with the raw amino-acid sequence, 215 residues long: Probable nicotinate-nucleotide adenylyltransferase (215 aa).

It belongs to the NadD family.

It catalyses the reaction nicotinate beta-D-ribonucleotide + ATP + H(+) = deamido-NAD(+) + diphosphate. Its pathway is cofactor biosynthesis; NAD(+) biosynthesis; deamido-NAD(+) from nicotinate D-ribonucleotide: step 1/1. In terms of biological role, catalyzes the reversible adenylation of nicotinate mononucleotide (NaMN) to nicotinic acid adenine dinucleotide (NaAD). The protein is Probable nicotinate-nucleotide adenylyltransferase of Coxiella burnetii (strain RSA 331 / Henzerling II).